Consider the following 507-residue polypeptide: Aromatase (507 aa).

Cysteine 436 lines the heme pocket.

The protein belongs to the cytochrome P450 family. Requires heme as cofactor.

It localises to the membrane. It carries out the reaction testosterone + 3 reduced [NADPH--hemoprotein reductase] + 3 O2 = 17beta-estradiol + formate + 3 oxidized [NADPH--hemoprotein reductase] + 4 H2O + 4 H(+). The catalysed reaction is androst-4-ene-3,17-dione + 3 reduced [NADPH--hemoprotein reductase] + 3 O2 = estrone + formate + 3 oxidized [NADPH--hemoprotein reductase] + 4 H2O + 4 H(+). Catalyzes the formation of aromatic C18 estrogens from C19 androgens. The polypeptide is Aromatase (CYP19A1) (Gallus gallus (Chicken)).